We begin with the raw amino-acid sequence, 444 residues long: Ribosomal protein uS12 methylthiotransferase RimO (444 aa).

Residues 4–118 (YKIGLISLGC…IQNYIDDFFN (115 aa)) enclose the MTTase N-terminal domain. The [4Fe-4S] cluster site is built by C13, C48, C81, C155, C159, and C162. One can recognise a Radical SAM core domain in the interval 141 to 371 (TTAKHMAYIR…MSIQQNVSSK (231 aa)). The 67-residue stretch at 374 to 440 (KNKLEKVYKV…EYDLIGVVCD (67 aa)) folds into the TRAM domain.

This sequence belongs to the methylthiotransferase family. RimO subfamily. The cofactor is [4Fe-4S] cluster.

Its subcellular location is the cytoplasm. The enzyme catalyses L-aspartate(89)-[ribosomal protein uS12]-hydrogen + (sulfur carrier)-SH + AH2 + 2 S-adenosyl-L-methionine = 3-methylsulfanyl-L-aspartate(89)-[ribosomal protein uS12]-hydrogen + (sulfur carrier)-H + 5'-deoxyadenosine + L-methionine + A + S-adenosyl-L-homocysteine + 2 H(+). Functionally, catalyzes the methylthiolation of an aspartic acid residue of ribosomal protein uS12. The polypeptide is Ribosomal protein uS12 methylthiotransferase RimO (Clostridium novyi (strain NT)).